The primary structure comprises 327 residues: Ferrochelatase 2 (327 aa).

Residues histidine 201 and glutamate 282 each contribute to the Fe cation site.

Belongs to the ferrochelatase family.

It is found in the cytoplasm. It carries out the reaction heme b + 2 H(+) = protoporphyrin IX + Fe(2+). It functions in the pathway porphyrin-containing compound metabolism; protoheme biosynthesis; protoheme from protoporphyrin-IX: step 1/1. Its function is as follows. Catalyzes the ferrous insertion into protoporphyrin IX. In Shewanella oneidensis (strain ATCC 700550 / JCM 31522 / CIP 106686 / LMG 19005 / NCIMB 14063 / MR-1), this protein is Ferrochelatase 2.